The sequence spans 407 residues: Prolyl hydroxylase EGLN2 (407 aa).

2 stretches are compositionally biased toward low complexity: residues 1 to 24 (MDSP…SSEP) and 57 to 75 (ASAG…TASP). Disordered regions lie at residues 1–34 (MDSP…RARM), 50–89 (CPGV…GELR), and 108–157 (AAQG…CSSG). The short motif at 89–134 (RPLQSEGAAALVTKGCQRLAAQGARPEAPKRKWAEDGGDAPSPSKR) is the Bipartite nuclear localization signal element. Residue Ser130 is modified to Phosphoserine. Residues 225 to 235 (VSQRAIPPRSI) are beta(2)beta(3) 'finger-like' loop. One can recognise a Fe2OG dioxygenase domain in the interval 278 to 376 (GRTKAMVACY…RYAITVWYFD (99 aa)). 3 residues coordinate Fe cation: His297, Asp299, and His358. 2-oxoglutarate is bound at residue Arg367.

As to quaternary structure, interacts (preferably isoform p40) with SIAH2; the interaction targets both SIAH2 isoforms for proteasomal degradation in vitro. Interacts with LIMD1, WTIP and AJUBA. The cofactor is Fe(2+). L-ascorbate serves as cofactor. Ubiquitinated by SIAH1 and/or SIAH2 in response to the unfolded protein response (UPR), leading to its degradation. In terms of tissue distribution, expressed in adult and fetal heart, brain, liver, lung, skeletal muscle, and kidney. Also expressed in testis and placenta. Highest levels in adult brain, placenta, lung, kidney, and testis. Expressed in hormone responsive tissues, including normal and cancerous mammary, ovarian and prostate epithelium.

It is found in the nucleus. It catalyses the reaction L-prolyl-[protein] + 2-oxoglutarate + O2 = trans-4-hydroxy-L-prolyl-[protein] + succinate + CO2. The catalysed reaction is L-prolyl-[hypoxia-inducible factor alpha subunit] + 2-oxoglutarate + O2 = trans-4-hydroxy-L-prolyl-[hypoxia-inducible factor alpha subunit] + succinate + CO2. Prolyl hydroxylase that mediates hydroxylation of proline residues in target proteins, such as ATF4, IKBKB, CEP192 and HIF1A. Target proteins are preferentially recognized via a LXXLAP motif. Cellular oxygen sensor that catalyzes, under normoxic conditions, the post-translational formation of 4-hydroxyproline in hypoxia-inducible factor (HIF) alpha proteins. Hydroxylates a specific proline found in each of the oxygen-dependent degradation (ODD) domains (N-terminal, NODD, and C-terminal, CODD) of HIF1A. Also hydroxylates HIF2A. Has a preference for the CODD site for both HIF1A and HIF2A. Hydroxylated HIFs are then targeted for proteasomal degradation via the von Hippel-Lindau ubiquitination complex. Under hypoxic conditions, the hydroxylation reaction is attenuated allowing HIFs to escape degradation resulting in their translocation to the nucleus, heterodimerization with HIF1B, and increased expression of hypoxy-inducible genes. EGLN2 is involved in regulating hypoxia tolerance and apoptosis in cardiac and skeletal muscle. Also regulates susceptibility to normoxic oxidative neuronal death. Links oxygen sensing to cell cycle and primary cilia formation by hydroxylating the critical centrosome component CEP192 which promotes its ubiquitination and subsequent proteasomal degradation. Hydroxylates IKBKB, mediating NF-kappa-B activation in hypoxic conditions. Also mediates hydroxylation of ATF4, leading to decreased protein stability of ATF4. This chain is Prolyl hydroxylase EGLN2, found in Homo sapiens (Human).